The chain runs to 208 residues: Thymidylate kinase (208 aa).

ATP is bound at residue 10–17; it reads GGEGAGKS.

It belongs to the thymidylate kinase family.

The enzyme catalyses dTMP + ATP = dTDP + ADP. Functionally, phosphorylation of dTMP to form dTDP in both de novo and salvage pathways of dTTP synthesis. The polypeptide is Thymidylate kinase (Alcanivorax borkumensis (strain ATCC 700651 / DSM 11573 / NCIMB 13689 / SK2)).